A 611-amino-acid polypeptide reads, in one-letter code: Chloroplast sensor kinase, chloroplastic (611 aa).

The N-terminal 79 residues, 1–79 (MLLSAIASQT…PGGGETMVAS (79 aa)), are a transit peptide targeting the chloroplast. Residues 17 to 50 (NLHFSNSIPNPRPSNPSLKLLNASSSSSSSSSSS) form a disordered region. The segment covering 40–50 (SSSSSSSSSSS) has biased composition (low complexity). The interval 116–300 (DFQRLCLEQL…VMDQKTMLLQ (185 aa)) is GAF. Cys121 contacts [3Fe-4S] cluster. Ser188 carries the post-translational modification Phosphoserine. A Histidine kinase domain is found at 312-602 (KLVEQIRGPL…RVELWLPAFP (291 aa)). A coiled-coil region spans residues 345-380 (VEDLIVQGDQIKDTLEELQDAVHLTKANIVRHNEEA). The segment covering 385 to 402 (NKTHNETRRSKYEHKDPI) has biased composition (basic and acidic residues). Positions 385 to 420 (NKTHNETRRSKYEHKDPIDGSQISSTRLSLGSGLDD) are disordered.

It belongs to the chloroplast sensor kinase protein family. Self-interacts. Interacts with the plastoquinone analog 2,5-dibromo-3-methyl-5-isopropyl-p-benzoquinone (DBMIB) and with SIGA/SIG1. Requires [3Fe-4S] cluster as cofactor. Autophosphorylated, possibly on tyrosine residues, in photosystem I (PS I) light and in the presence of manganese ions Mn(2+), to a lesser degree, in the presence of calcium ions Ca(2+), but not in the presence of magnesium ions Mg(2+). Dithiothreitol (DTT) stimulates autophosphorylation. Phosphorylated on Ser-188 in vivo after exposure to far-red light (when plastoquinone (PQ) is oxidized). Not phosphorylated under orange light (reduces PQ).

The protein localises to the plastid. It is found in the chloroplast stroma. It catalyses the reaction L-tyrosyl-[protein] + ATP = O-phospho-L-tyrosyl-[protein] + ADP + H(+). In terms of biological role, sensor kinase that senses the plastoquinone (PQ) redox state involved in stoichiometry adjustment of both photosystems (e.g. long-term adaptation via transcriptional regulation of reaction center genes of photosystems I and II) and state transitions (e.g. short-term adaptation involving reversible post-translational phosphorylation of light-harvesting complex II, LHC II), thus linking photosynthesis with gene expression in chloroplasts. Autophosphorylates, probably on a tyrosine residue. Probably phosphorylates SIGA/SIG1 in response to plastoquinone redox state modification. Reduced PQ suppresses its autophosphorylation activity. Represses expression of a number of chloroplast-encoded genes. The sequence is that of Chloroplast sensor kinase, chloroplastic from Arabidopsis thaliana (Mouse-ear cress).